A 151-amino-acid chain; its full sequence is Apolipoprotein A-I (151 aa).

The N-terminal stretch at 1 to 18 (MKAVVLTLAVLFLTGSQA) is a signal peptide. Residues 19-24 (RHFWQQ) constitute a propeptide that is removed on maturation. 2 consecutive repeat copies span residues 67–88 (LKLL…EQIG) and 89–110 (PVTQ…QEMS). Positions 67–143 (LKLLDNWDTL…EVELYRQKVA (77 aa)) are 4 X approximate tandem repeats. At methionine 109 the chain carries Methionine sulfoxide. A 3; half-length repeat occupies 111 to 121 (KDLEEVKQKVQ). The stretch at 122–143 (PYLDDFQKKWQEEVELYRQKVA) is repeat 4.

This sequence belongs to the apolipoprotein A1/A4/E family. As to quaternary structure, homodimer. Interacts with APOA1BP and CLU. Component of a sperm activating protein complex (SPAP), consisting of APOA1, an immunoglobulin heavy chain, an immunoglobulin light chain and albumin. Interacts with NDRG1. Interacts with SCGB3A2. Interacts with NAXE and YJEFN3. Post-translationally, glycosylated. Palmitoylated. In terms of processing, phosphorylation sites are present in the extracellular medium. In terms of tissue distribution, major protein of plasma HDL, also found in chylomicrons.

The protein localises to the secreted. Participates in the reverse transport of cholesterol from tissues to the liver for excretion by promoting cholesterol efflux from tissues and by acting as a cofactor for the lecithin cholesterol acyltransferase (LCAT). As part of the SPAP complex, activates spermatozoa motility. The protein is Apolipoprotein A-I (APOA1) of Panthera tigris altaica (Siberian tiger).